Reading from the N-terminus, the 122-residue chain is Ribosome-binding factor A (122 aa).

Belongs to the RbfA family. Monomer. Binds 30S ribosomal subunits, but not 50S ribosomal subunits or 70S ribosomes.

It is found in the cytoplasm. Functionally, one of several proteins that assist in the late maturation steps of the functional core of the 30S ribosomal subunit. Associates with free 30S ribosomal subunits (but not with 30S subunits that are part of 70S ribosomes or polysomes). Required for efficient processing of 16S rRNA. May interact with the 5'-terminal helix region of 16S rRNA. In Syntrophomonas wolfei subsp. wolfei (strain DSM 2245B / Goettingen), this protein is Ribosome-binding factor A.